We begin with the raw amino-acid sequence, 2590 residues long: DNA polymerase theta (2590 aa).

Residues 1–12 show a composition bias toward basic residues; the sequence is MNLLRRSGKRRR. Residues 1 to 33 form a disordered region; it reads MNLLRRSGKRRRSESGSDSFSGSGGDSSASPQF. A compositionally biased stretch (low complexity) spans 16 to 30; the sequence is GSDSFSGSGGDSSAS. Residues glutamine 96 and 115 to 122 each bind ATP; that span reads APTSAGKT. The 185-residue stretch at 102 to 286 folds into the Helicase ATP-binding domain; it reads LGQVLEGKNL…WLNAELYHTD (185 aa). Residues 102-554 form a helicase activity region; sequence LGQVLEGKNL…STSQDMHTYA (453 aa). Residues 216–219 carry the DEAH box motif; it reads DELH. In terms of domain architecture, Helicase C-terminal spans 321 to 554; the sequence is GDEDHVVSLC…STSQDMHTYA (234 aa). The interval 847–894 is interaction with RAD51; it reads DEEEEAVEERRNMRTIWVTGRKGLTEREAAALIVEEARMILQQDLVEM. Lysine 990 is modified (N6-acetyllysine). The tract at residues 1034–1060 is disordered; sequence KMSRSFRSWKRRKHLKRSRDSSPLKDS. Residues 1040-1050 are compositionally biased toward basic residues; that stretch reads RSWKRRKHLKR. A phosphoserine; by PLK1 mark is found at serine 1289, serine 1482, serine 1486, serine 1488, serine 1493, serine 1555, and serine 1563. The tract at residues 1594–1622 is disordered; sequence SDPVLDEHHQGDQDGGDQDERAEKSKLTG. Residues 1598-1619 show a composition bias toward basic and acidic residues; it reads LDEHHQGDQDGGDQDERAEKSK. Residues serine 1628 and serine 1635 each carry the phosphoserine; by PLK1 modification. Threonine 1755 is subject to Phosphothreonine; by PLK1. A disordered region spans residues 1777 to 1797; it reads PSDIKNHDLSPGSRNGFKDNS. The tract at residues 2097-2584 is DNA polymerase activity; it reads AECESQKHIM…KVKIGASWGE (488 aa). 2 loop regions span residues 2142–2177 and 2257–2322; these read KLPPNREMKNQGSKKTLGSTRRGIDNGRKLRLGRQF and EIKM…VPFP. Mg(2+) contacts are provided by aspartate 2330 and tyrosine 2331. The segment at 2491–2535 is loop 3; it reads QLETFHSTFKSHGHREGMLQSDQTGLSRKRKLQGMFCPIRGGFFI. Position 2540 (aspartate 2540) interacts with Mg(2+).

It belongs to the DNA polymerase type-A family. In terms of assembly, homomultimer; forms homodimers and homotetramers. Interacts with RAD51. Interacts with ORC2 and ORC4. Interacts with RHNO1; interaction takes place during mitosis and promotes POLQ recruitment to DNA damage sites. Interacts (when phosphorylated) with TOPBP1 (via BRCT domains 7 and 8); promoting POLQ recruitment to DNA damage sites. The cofactor is Mg(2+). In terms of processing, phosphorylated by PLK1; promoting interaction with TOPBP1 and recruitment to DNA damage sites. Highly expressed in testis.

Its subcellular location is the nucleus. It is found in the chromosome. The enzyme catalyses DNA(n) + a 2'-deoxyribonucleoside 5'-triphosphate = DNA(n+1) + diphosphate. The catalysed reaction is ATP + H2O = ADP + phosphate + H(+). Its activity is regulated as follows. Specifically inhibited by the antibiotic novobiocin. The polymerase activity is specifically inhibited by the small molecule ART558. Novobiocin and ART558 confer specific killing of BRCA1/2-deficient cells and synergize with the poly [ADP-ribose] polymerase (PARP) inhibitor olaparib. Functionally, low-fidelity DNA polymerase with a helicase activity that promotes microhomology-mediated end-joining (MMEJ), an alternative non-homologous end-joining (NHEJ) machinery required to repair double-strand breaks in DNA during mitosis. MMEJ is an error-prone repair pathway that produces deletions of sequences from the strand being repaired and promotes genomic rearrangements, such as telomere fusions, some of them leading to cellular transformation. MMEJ is required during mitosis to repair persistent double-strand breaks that originate in S-phase. Although error-prone, MMEJ protects against chromosomal instability and tumorigenesis. The polymerase acts by binding directly the 2 ends of resected double-strand breaks, allowing microhomologous sequences in the overhangs to form base pairs. It then extends each strand from the base-paired region using the opposing overhang as a template. Requires partially resected DNA containing 2 to 6 base pairs of microhomology to perform MMEJ. The polymerase lacks proofreading activity and is highly promiscuous: unlike most polymerases, promotes extension of ssDNA and partial ssDNA (pssDNA) substrates. When the ends of a break do not contain terminal microhomology must identify embedded complementary sequences through a scanning step. Also acts as a DNA helicase, promoting dissociation of the replication protein A complex (RPA/RP-A), composed of RPA1, RPA2 and RPA3, from resected double-strand breaks to allow their annealing and subsequent joining by MMEJ. Removal of RPA/RP-A complex proteins prevents RAD51 accumulation at resected ends, thereby inhibiting homology-recombination repair (HR) pathway. Also shows RNA-directed DNA polymerase activity to mediate DNA repair in vitro; however this activity needs additional evidence in vivo. May also have lyase activity. Involved in somatic hypermutation of immunoglobulin genes, a process that requires the activity of DNA polymerases to ultimately introduce mutations at both A/T and C/G base pairs. POLQ-mediated end joining activity is involved in random integration of exogenous DNA hampers. In Homo sapiens (Human), this protein is DNA polymerase theta.